Reading from the N-terminus, the 493-residue chain is Probable glycine dehydrogenase (decarboxylating) subunit 2 (493 aa).

Position 269 is an N6-(pyridoxal phosphate)lysine (K269).

The protein belongs to the GcvP family. C-terminal subunit subfamily. In terms of assembly, the glycine cleavage system is composed of four proteins: P, T, L and H. In this organism, the P 'protein' is a heterodimer of two subunits. Requires pyridoxal 5'-phosphate as cofactor.

The enzyme catalyses N(6)-[(R)-lipoyl]-L-lysyl-[glycine-cleavage complex H protein] + glycine + H(+) = N(6)-[(R)-S(8)-aminomethyldihydrolipoyl]-L-lysyl-[glycine-cleavage complex H protein] + CO2. In terms of biological role, the glycine cleavage system catalyzes the degradation of glycine. The P protein binds the alpha-amino group of glycine through its pyridoxal phosphate cofactor; CO(2) is released and the remaining methylamine moiety is then transferred to the lipoamide cofactor of the H protein. This Chloroherpeton thalassium (strain ATCC 35110 / GB-78) protein is Probable glycine dehydrogenase (decarboxylating) subunit 2.